Reading from the N-terminus, the 355-residue chain is Butyrate kinase 1 (355 aa).

The protein belongs to the acetokinase family.

The protein resides in the cytoplasm. It catalyses the reaction butanoate + ATP = butanoyl phosphate + ADP. It participates in lipid metabolism; butanoate metabolism. Catalyzes the conversion of butyryl-CoA through butyryl phosphate to butyrate. This is Butyrate kinase 1 (buk1) from Clostridium acetobutylicum (strain ATCC 824 / DSM 792 / JCM 1419 / IAM 19013 / LMG 5710 / NBRC 13948 / NRRL B-527 / VKM B-1787 / 2291 / W).